The chain runs to 273 residues: Ribosomal RNA small subunit methyltransferase A (273 aa).

S-adenosyl-L-methionine-binding residues include His10, Leu12, Gly37, Glu58, Asp83, and Asn108.

The protein belongs to the class I-like SAM-binding methyltransferase superfamily. rRNA adenine N(6)-methyltransferase family. RsmA subfamily.

It localises to the cytoplasm. The catalysed reaction is adenosine(1518)/adenosine(1519) in 16S rRNA + 4 S-adenosyl-L-methionine = N(6)-dimethyladenosine(1518)/N(6)-dimethyladenosine(1519) in 16S rRNA + 4 S-adenosyl-L-homocysteine + 4 H(+). Its function is as follows. Specifically dimethylates two adjacent adenosines (A1518 and A1519) in the loop of a conserved hairpin near the 3'-end of 16S rRNA in the 30S particle. May play a critical role in biogenesis of 30S subunits. The protein is Ribosomal RNA small subunit methyltransferase A of Picosynechococcus sp. (strain ATCC 27264 / PCC 7002 / PR-6) (Agmenellum quadruplicatum).